Reading from the N-terminus, the 99-residue chain is Integration host factor subunit alpha (99 aa).

The segment at 49–75 (FGNFDLRDKNQRPGRNPKTGEDIPITA) is disordered.

It belongs to the bacterial histone-like protein family. Heterodimer of an alpha and a beta chain.

Its function is as follows. This protein is one of the two subunits of integration host factor, a specific DNA-binding protein that functions in genetic recombination as well as in transcriptional and translational control. The chain is Integration host factor subunit alpha from Klebsiella pneumoniae (strain 342).